Here is a 274-residue protein sequence, read N- to C-terminus: Large ribosomal subunit protein uL2 (274 aa).

The interval 221 to 274 (RGTAMNPVDHPHGGGEGRNFGKHPVTPWGVQTKGKKTRSNKRTDKFIVRRRSKK) is disordered.

It belongs to the universal ribosomal protein uL2 family. In terms of assembly, part of the 50S ribosomal subunit. Forms a bridge to the 30S subunit in the 70S ribosome.

In terms of biological role, one of the primary rRNA binding proteins. Required for association of the 30S and 50S subunits to form the 70S ribosome, for tRNA binding and peptide bond formation. It has been suggested to have peptidyltransferase activity; this is somewhat controversial. Makes several contacts with the 16S rRNA in the 70S ribosome. This Yersinia pseudotuberculosis serotype O:1b (strain IP 31758) protein is Large ribosomal subunit protein uL2.